A 481-amino-acid polypeptide reads, in one-letter code: Phosphoenolpyruvate phosphatase (481 aa).

The N-terminal stretch at 1 to 36 (MPIYTSRSCFYLLLFHIILLCSVDKTLCRQTSSFVR) is a signal peptide. N-linked (GlcNAc...) asparagine glycosylation occurs at asparagine 109. Positions 168, 195, and 198 each coordinate Fe cation. Residue aspartate 195 coordinates Zn(2+). Asparagine 206 is a glycosylation site (N-linked (GlcNAc...) asparagine). Zn(2+) is bound by residues asparagine 232 and histidine 317. Residue asparagine 232 participates in substrate binding. Histidine 327 (proton donor) is an active-site residue. Histidine 354 serves as a coordination point for Zn(2+). 354–356 (HVH) contacts substrate. Histidine 356 serves as a coordination point for Fe cation. N-linked (GlcNAc...) asparagine glycosylation is found at asparagine 370 and asparagine 427.

The protein belongs to the metallophosphoesterase superfamily. Purple acid phosphatase family.

It is found in the vacuole lumen. The enzyme catalyses phosphoenolpyruvate + H2O = pyruvate + phosphate. Its function is as follows. Phosphoenolpyruvate phosphatase that probably operates in the vacuole to release phosphate from phosphoenolpyruvate (PEP) under phosphorus starvation. The chain is Phosphoenolpyruvate phosphatase (ACPEPP) from Allium cepa (Onion).